Consider the following 101-residue polypeptide: Ferredoxin-3 (101 aa).

4Fe-4S ferredoxin-type domains are found at residues 17–46 and 70–100; these read YLMKIDEQKCIGCGRCFKVCGRDVMSLHGL and KVMALTGAENCIGCGACARVCPSECQTHAAL. Residues Cys-26, Cys-29, Cys-32, Cys-36, Cys-80, Cys-83, Cys-86, and Cys-90 each contribute to the [4Fe-4S] cluster site.

As to quaternary structure, homodimer. Requires [4Fe-4S] cluster as cofactor.

Functionally, ferredoxins are iron-sulfur proteins that transfer electrons in a wide variety of metabolic reactions. The chain is Ferredoxin-3 (fdxB) from Rhodobacter capsulatus (Rhodopseudomonas capsulata).